A 621-amino-acid chain; its full sequence is 1-deoxy-D-xylulose-5-phosphate synthase (621 aa).

Thiamine diphosphate contacts are provided by residues histidine 80 and 121–123; that span reads GHS. Aspartate 152 is a Mg(2+) binding site. Residues 153 to 154, asparagine 181, tyrosine 288, and glutamate 370 contribute to the thiamine diphosphate site; that span reads GA. Asparagine 181 serves as a coordination point for Mg(2+).

This sequence belongs to the transketolase family. DXPS subfamily. As to quaternary structure, homodimer. The cofactor is Mg(2+). Thiamine diphosphate serves as cofactor.

The catalysed reaction is D-glyceraldehyde 3-phosphate + pyruvate + H(+) = 1-deoxy-D-xylulose 5-phosphate + CO2. Its pathway is metabolic intermediate biosynthesis; 1-deoxy-D-xylulose 5-phosphate biosynthesis; 1-deoxy-D-xylulose 5-phosphate from D-glyceraldehyde 3-phosphate and pyruvate: step 1/1. Catalyzes the acyloin condensation reaction between C atoms 2 and 3 of pyruvate and glyceraldehyde 3-phosphate to yield 1-deoxy-D-xylulose-5-phosphate (DXP). The sequence is that of 1-deoxy-D-xylulose-5-phosphate synthase from Shewanella frigidimarina (strain NCIMB 400).